The following is a 375-amino-acid chain: Probable trehalose-phosphate phosphatase 7 (375 aa).

Belongs to the trehalose phosphatase family. It depends on a divalent metal cation as a cofactor.

It carries out the reaction alpha,alpha-trehalose 6-phosphate + H2O = alpha,alpha-trehalose + phosphate. The protein operates within glycan biosynthesis; trehalose biosynthesis. Removes the phosphate from trehalose 6-phosphate to produce free trehalose. Trehalose accumulation in plant may improve abiotic stress tolerance. This is Probable trehalose-phosphate phosphatase 7 (TPP7) from Oryza sativa subsp. japonica (Rice).